The following is a 199-amino-acid chain: CASP-like protein 4B1 (199 aa).

A disordered region spans residues 1–32 (MAMVASPDDIVKSPLPPPPPPPPPPLPPAHKD). Residues 1–53 (MAMVASPDDIVKSPLPPPPPPPPPPLPPAHKDKAAYNPYSGCPAHGGDDGLDG) lie on the Cytoplasmic side of the membrane. A compositionally biased stretch (pro residues) spans 14–28 (PLPPPPPPPPPPLPP). Residues 54 to 74 (IVLVLRAAAALLALVAMALVA) form a helical membrane-spanning segment. Residues 75–91 (SCRHGDWMEFTRYQEYR) lie on the Extracellular side of the membrane. Residues 92-112 (YLLGVAVVASLYSALQAARTF) form a helical membrane-spanning segment. The Cytoplasmic segment spans residues 113-127 (RRMRAGTAYAATFLD). The chain crosses the membrane as a helical span at residues 128-148 (FAGDQAVGYLLITASSAALPI). Over 149-163 (TIRMRSAVVNTFTDV) the chain is Extracellular. A helical transmembrane segment spans residues 164-184 (VAASISFAFLAFAALAFSALI). The Cytoplasmic segment spans residues 185-199 (AGFRLSSSSSSAYNY).

The protein belongs to the Casparian strip membrane proteins (CASP) family. Homodimer and heterodimers.

It localises to the cell membrane. The sequence is that of CASP-like protein 4B1 from Oryza sativa subsp. japonica (Rice).